The sequence spans 200 residues: Recombination protein RecR (200 aa).

The C4-type zinc-finger motif lies at 57 to 72 (CRSCRTLTEEELCPQC). Residues 80–175 (TLLCVVEGPT…VASRIAHGVP (96 aa)) form the Toprim domain.

The protein belongs to the RecR family.

Functionally, may play a role in DNA repair. It seems to be involved in an RecBC-independent recombinational process of DNA repair. It may act with RecF and RecO. The chain is Recombination protein RecR from Pseudomonas savastanoi pv. phaseolicola (strain 1448A / Race 6) (Pseudomonas syringae pv. phaseolicola (strain 1448A / Race 6)).